Reading from the N-terminus, the 261-residue chain is Tyrosine phosphatase-like protein H5 (261 aa).

The Tyrosine-protein phosphatase domain maps to 26–261 (LIKKEHDKVL…ESVEQEYFVP (236 aa)).

This sequence belongs to the protein-tyrosine phosphatase family.

This chain is Tyrosine phosphatase-like protein H5 (H6), found in Microplitis demolitor bracovirus (isolate Webb) (MdBV).